Here is a 185-residue protein sequence, read N- to C-terminus: Ribosome-recycling factor (185 aa).

Belongs to the RRF family.

It is found in the cytoplasm. Functionally, responsible for the release of ribosomes from messenger RNA at the termination of protein biosynthesis. May increase the efficiency of translation by recycling ribosomes from one round of translation to another. This chain is Ribosome-recycling factor, found in Brevibacillus brevis (strain 47 / JCM 6285 / NBRC 100599).